The following is a 188-amino-acid chain: Threonylcarbamoyl-AMP synthase (188 aa).

The 186-residue stretch at 3-188 (QLQPSAVATT…RSGQILRNGS (186 aa)) folds into the YrdC-like domain.

This sequence belongs to the SUA5 family. TsaC subfamily.

The protein resides in the cytoplasm. The enzyme catalyses L-threonine + hydrogencarbonate + ATP = L-threonylcarbamoyladenylate + diphosphate + H2O. Its function is as follows. Required for the formation of a threonylcarbamoyl group on adenosine at position 37 (t(6)A37) in tRNAs that read codons beginning with adenine. Catalyzes the conversion of L-threonine, HCO(3)(-)/CO(2) and ATP to give threonylcarbamoyl-AMP (TC-AMP) as the acyladenylate intermediate, with the release of diphosphate. The protein is Threonylcarbamoyl-AMP synthase of Shewanella frigidimarina (strain NCIMB 400).